A 624-amino-acid polypeptide reads, in one-letter code: Pentatricopeptide repeat-containing protein At2g32630 (624 aa).

13 PPR repeats span residues 153 to 187, 188 to 222, 223 to 257, 258 to 292, 293 to 327, 328 to 362, 363 to 397, 398 to 432, 433 to 467, 468 to 502, 503 to 537, 538 to 572, and 573 to 607; these read FEKF…GLSI, DERS…GVKI, TVYS…GIKP, EAYT…GVVY, NKVT…GIES, DVHV…GLSP, SSYT…GVNI, TQVV…GFQA, DVFT…GVKL, STVS…GVQP, NAIT…GMDP, DSYT…GLDQ, and NSVT…GYTI.

The protein belongs to the PPR family. P subfamily.

In Arabidopsis thaliana (Mouse-ear cress), this protein is Pentatricopeptide repeat-containing protein At2g32630.